A 273-amino-acid chain; its full sequence is Large ribosomal subunit protein uL2 (273 aa).

The tract at residues 221–263 (RGTAMNPVDHPHGGGEGRNFGKHPVTPWGVQTKGKKTRHNKRT) is disordered. Over residues 253–263 (KGKKTRHNKRT) the composition is skewed to basic residues.

Belongs to the universal ribosomal protein uL2 family. As to quaternary structure, part of the 50S ribosomal subunit. Forms a bridge to the 30S subunit in the 70S ribosome.

In terms of biological role, one of the primary rRNA binding proteins. Required for association of the 30S and 50S subunits to form the 70S ribosome, for tRNA binding and peptide bond formation. It has been suggested to have peptidyltransferase activity; this is somewhat controversial. Makes several contacts with the 16S rRNA in the 70S ribosome. This Actinobacillus succinogenes (strain ATCC 55618 / DSM 22257 / CCUG 43843 / 130Z) protein is Large ribosomal subunit protein uL2.